The following is a 342-amino-acid chain: Phosphate acyltransferase (342 aa).

Belongs to the PlsX family. In terms of assembly, homodimer. Probably interacts with PlsY.

The protein resides in the cytoplasm. It catalyses the reaction a fatty acyl-[ACP] + phosphate = an acyl phosphate + holo-[ACP]. It participates in lipid metabolism; phospholipid metabolism. Its function is as follows. Catalyzes the reversible formation of acyl-phosphate (acyl-PO(4)) from acyl-[acyl-carrier-protein] (acyl-ACP). This enzyme utilizes acyl-ACP as fatty acyl donor, but not acyl-CoA. The chain is Phosphate acyltransferase from Shewanella putrefaciens (strain CN-32 / ATCC BAA-453).